A 636-amino-acid polypeptide reads, in one-letter code: Probable potassium transport system protein Kup (636 aa).

A run of 12 helical transmembrane segments spans residues 22–42, 64–84, 115–135, 150–170, 182–202, 220–240, 261–281, 293–313, 351–371, 383–403, 408–428, and 433–453; these read VGLL…SPLY, ILSL…VMFI, LMVI…MITP, FDGI…ALFL, LFGP…VHGI, FFVV…LALT, WFIL…ALLL, LLAP…ATVI, IYIG…VIGF, VAVT…MLLL, PLLA…FFAA, and IAQG…LMST.

The protein belongs to the HAK/KUP transporter (TC 2.A.72) family.

It is found in the cell inner membrane. It catalyses the reaction K(+)(in) + H(+)(in) = K(+)(out) + H(+)(out). Its function is as follows. Transport of potassium into the cell. Likely operates as a K(+):H(+) symporter. In Pseudomonas putida (strain ATCC 47054 / DSM 6125 / CFBP 8728 / NCIMB 11950 / KT2440), this protein is Probable potassium transport system protein Kup.